The chain runs to 945 residues: Isoleucine--tRNA ligase (945 aa).

A 'HIGH' region motif is present at residues Pro-66 to His-76. L-isoleucyl-5'-AMP is bound at residue Glu-581. A 'KMSKS' region motif is present at residues Lys-622 to Ser-626. Lys-625 lines the ATP pocket. Residues Cys-908, Cys-911, Cys-928, and Cys-931 each contribute to the Zn(2+) site.

The protein belongs to the class-I aminoacyl-tRNA synthetase family. IleS type 1 subfamily. Monomer. Zn(2+) serves as cofactor.

The protein localises to the cytoplasm. It carries out the reaction tRNA(Ile) + L-isoleucine + ATP = L-isoleucyl-tRNA(Ile) + AMP + diphosphate. In terms of biological role, catalyzes the attachment of isoleucine to tRNA(Ile). As IleRS can inadvertently accommodate and process structurally similar amino acids such as valine, to avoid such errors it has two additional distinct tRNA(Ile)-dependent editing activities. One activity is designated as 'pretransfer' editing and involves the hydrolysis of activated Val-AMP. The other activity is designated 'posttransfer' editing and involves deacylation of mischarged Val-tRNA(Ile). In Burkholderia lata (strain ATCC 17760 / DSM 23089 / LMG 22485 / NCIMB 9086 / R18194 / 383), this protein is Isoleucine--tRNA ligase.